We begin with the raw amino-acid sequence, 105 residues long: UPF0045 protein ECM15 (105 aa).

The protein belongs to the UPF0045 family.

The chain is UPF0045 protein ECM15 (ECM15) from Eremothecium gossypii (strain ATCC 10895 / CBS 109.51 / FGSC 9923 / NRRL Y-1056) (Yeast).